The following is a 699-amino-acid chain: D-(-)-3-hydroxybutyrate oligomer hydrolase (699 aa).

The signal sequence occupies residues 1–33; the sequence is MTAIRGGSRRAPGLALALLGGVLLGACHGDENA. S311 (charge relay system) is an active-site residue.

This sequence belongs to the D-(-)-3-hydroxybutyrate oligomer hydrolase family.

The protein localises to the secreted. The enzyme catalyses (3R)-hydroxybutanoate dimer + H2O = 2 (R)-3-hydroxybutanoate + H(+). Its pathway is lipid metabolism; butanoate metabolism. Functionally, participates in the degradation of poly-3-hydroxybutyrate (PHB). It works downstream of poly(3-hydroxybutyrate) depolymerase, hydrolyzing D(-)-3-hydroxybutyrate oligomers of various length (3HB-oligomers) into 3HB-monomers. The polypeptide is D-(-)-3-hydroxybutyrate oligomer hydrolase (Burkholderia pseudomallei (strain 1710b)).